Here is a 176-residue protein sequence, read N- to C-terminus: ATP synthase subunit delta (176 aa).

Belongs to the ATPase delta chain family. In terms of assembly, F-type ATPases have 2 components, F(1) - the catalytic core - and F(0) - the membrane proton channel. F(1) has five subunits: alpha(3), beta(3), gamma(1), delta(1), epsilon(1). F(0) has three main subunits: a(1), b(2) and c(10-14). The alpha and beta chains form an alternating ring which encloses part of the gamma chain. F(1) is attached to F(0) by a central stalk formed by the gamma and epsilon chains, while a peripheral stalk is formed by the delta and b chains.

It localises to the cell inner membrane. F(1)F(0) ATP synthase produces ATP from ADP in the presence of a proton or sodium gradient. F-type ATPases consist of two structural domains, F(1) containing the extramembraneous catalytic core and F(0) containing the membrane proton channel, linked together by a central stalk and a peripheral stalk. During catalysis, ATP synthesis in the catalytic domain of F(1) is coupled via a rotary mechanism of the central stalk subunits to proton translocation. Its function is as follows. This protein is part of the stalk that links CF(0) to CF(1). It either transmits conformational changes from CF(0) to CF(1) or is implicated in proton conduction. The chain is ATP synthase subunit delta from Campylobacter curvus (strain 525.92).